The chain runs to 292 residues: Homoserine kinase (292 aa).

An ATP-binding site is contributed by 81-91 (RPRSGLGSSGA).

The protein belongs to the GHMP kinase family. Homoserine kinase subfamily.

The protein resides in the cytoplasm. It carries out the reaction L-homoserine + ATP = O-phospho-L-homoserine + ADP + H(+). The protein operates within amino-acid biosynthesis; L-threonine biosynthesis; L-threonine from L-aspartate: step 4/5. In terms of biological role, catalyzes the ATP-dependent phosphorylation of L-homoserine to L-homoserine phosphate. The chain is Homoserine kinase from Thermococcus gammatolerans (strain DSM 15229 / JCM 11827 / EJ3).